The sequence spans 176 residues: NAD(P)H-quinone oxidoreductase subunit J (176 aa).

Positions 1–10 (MSETPTSPNQ) are enriched in polar residues. A disordered region spans residues 1-22 (MSETPTSPNQDLPEAPQAGPLS).

The protein belongs to the complex I 30 kDa subunit family. NDH-1 can be composed of about 15 different subunits; different subcomplexes with different compositions have been identified which probably have different functions.

It localises to the cellular thylakoid membrane. The catalysed reaction is a plastoquinone + NADH + (n+1) H(+)(in) = a plastoquinol + NAD(+) + n H(+)(out). It catalyses the reaction a plastoquinone + NADPH + (n+1) H(+)(in) = a plastoquinol + NADP(+) + n H(+)(out). NDH-1 shuttles electrons from an unknown electron donor, via FMN and iron-sulfur (Fe-S) centers, to quinones in the respiratory and/or the photosynthetic chain. The immediate electron acceptor for the enzyme in this species is believed to be plastoquinone. Couples the redox reaction to proton translocation, and thus conserves the redox energy in a proton gradient. Cyanobacterial NDH-1 also plays a role in inorganic carbon-concentration. The chain is NAD(P)H-quinone oxidoreductase subunit J from Synechococcus sp. (strain RCC307).